The chain runs to 210 residues: High frequency lysogenization protein HflD homolog (210 aa).

A coiled-coil region spans residues 103–130; the sequence is EAKAKLAERLQQIERQLPLYENDIMADQ.

Belongs to the HflD family.

Its subcellular location is the cytoplasm. The protein localises to the cell inner membrane. This chain is High frequency lysogenization protein HflD homolog, found in Actinobacillus pleuropneumoniae serotype 5b (strain L20).